The chain runs to 337 residues: DNA-directed RNA polymerase subunit alpha (337 aa).

The segment at 1–231 (MRNITTSAYT…KQLSVFDKIT (231 aa)) is alpha N-terminal domain (alpha-NTD). An alpha C-terminal domain (alpha-CTD) region spans residues 247–337 (ENTKLLQNIT…IAELKAQNEG (91 aa)).

It belongs to the RNA polymerase alpha chain family. Homodimer. The RNAP catalytic core consists of 2 alpha, 1 beta, 1 beta' and 1 omega subunit. When a sigma factor is associated with the core the holoenzyme is formed, which can initiate transcription.

The enzyme catalyses RNA(n) + a ribonucleoside 5'-triphosphate = RNA(n+1) + diphosphate. DNA-dependent RNA polymerase catalyzes the transcription of DNA into RNA using the four ribonucleoside triphosphates as substrates. In Campylobacter jejuni subsp. jejuni serotype O:2 (strain ATCC 700819 / NCTC 11168), this protein is DNA-directed RNA polymerase subunit alpha.